We begin with the raw amino-acid sequence, 537 residues long: Intercellular adhesion molecule 1 (537 aa).

The N-terminal stretch at 1-27 (MASTRAKPTLPLLLALVTVVIPGPGDA) is a signal peptide. Residues 28–485 (QVSIHPREAF…LTVLYHSQNN (458 aa)) are Extracellular-facing. Ig-like C2-type domains lie at 41-102 (GGSV…QSSA) and 127-195 (GKDL…LDLR). The N-linked (GlcNAc...) asparagine glycan is linked to asparagine 47. Cystine bridges form between cysteine 48–cysteine 91, cysteine 52–cysteine 95, and cysteine 134–cysteine 188. The Cell attachment site; atypical motif lies at 151 to 153 (RGE). The short motif at 179-181 (RGD) is the Cell attachment site element. 9 N-linked (GlcNAc...) asparagine glycosylation sites follow: asparagine 185, asparagine 204, asparagine 267, asparagine 311, asparagine 362, asparagine 388, asparagine 409, asparagine 456, and asparagine 469. The 68-residue stretch at 232-299 (GTQQKLFCSL…LRCVLELADQ (68 aa)) folds into the Ig-like C2-type 3 domain. The cysteines at positions 239 and 292 are disulfide-linked. In terms of domain architecture, Ig-like C2-type 4 spans 327 to 381 (GSQVTVKCEAHSGSKVVLLSGVEPRPPTPQVQFTLNASSEDHKRSFFCSAALEVA). A disulfide bridge links cysteine 334 with cysteine 374. 3 disulfide bridges follow: cysteine 406/cysteine 422, cysteine 422/cysteine 461, and cysteine 434/cysteine 461. An Ig-like C2-type 5 domain is found at 415–468 (GSQQTLKCQAWGNPSPKMTCRRKADGALLPIGVVKSVKQEMNGTYVCHAFSSHG). The helical transmembrane segment at 486 to 509 (WTIIILVPVLLVIVGLVMAASYVY) threads the bilayer. Topologically, residues 510–537 (NRQRKIRIYKLQKAQEEAIKLKGQAPPP) are cytoplasmic.

This sequence belongs to the immunoglobulin superfamily. ICAM family. As to quaternary structure, homodimer. Interacts with MUC1 and promotes cell aggregation in epithelial cells. Interacts with ARHGEF26/SGEF. Interacts (on T cell side) with CD81, CD247 and CD9 at immunological synapses between antigen-presenting cells and T cells. In terms of processing, monoubiquitinated, which is promoted by MARCH9 and leads to endocytosis. As to expression, expressed at low level on a subpopulation of lymphocytes, macrophages, and endothelial cells, but is strongly induced on these cells, and on fibroblasts and epithelial cells.

The protein localises to the membrane. In terms of biological role, ICAM proteins are ligands for the leukocyte adhesion protein LFA-1 (integrin alpha-L/beta-2). During leukocyte trans-endothelial migration, ICAM1 engagement promotes the assembly of endothelial apical cups through ARHGEF26/SGEF and RHOG activation. The polypeptide is Intercellular adhesion molecule 1 (Icam1) (Mus musculus (Mouse)).